The primary structure comprises 699 residues: Elongation factor G (699 aa).

A tr-type G domain is found at E8–I283. GTP is bound by residues A17 to T24, D81 to H85, and N135 to D138.

Belongs to the TRAFAC class translation factor GTPase superfamily. Classic translation factor GTPase family. EF-G/EF-2 subfamily.

The protein localises to the cytoplasm. Its function is as follows. Catalyzes the GTP-dependent ribosomal translocation step during translation elongation. During this step, the ribosome changes from the pre-translocational (PRE) to the post-translocational (POST) state as the newly formed A-site-bound peptidyl-tRNA and P-site-bound deacylated tRNA move to the P and E sites, respectively. Catalyzes the coordinated movement of the two tRNA molecules, the mRNA and conformational changes in the ribosome. The protein is Elongation factor G of Rickettsia typhi (strain ATCC VR-144 / Wilmington).